The sequence spans 594 residues: Type I restriction enzyme EcoEI specificity subunit (594 aa).

It belongs to the type-I restriction system S methylase family. In terms of assembly, the type I restriction/modification system is composed of three polypeptides R, M and S; the restriction enzyme has stoichiometry R(2)M(2)S(1) while the methyltransferase is M(2)S(1).

Functionally, the specificity (S) subunit of a type I restriction enzyme; this subunit dictates DNA sequence specificity. The M and S subunits together form a methyltransferase (MTase) that methylates two adenine residues of the sequence 5'-GAGN(7)ATGC-3'. In the presence of the R subunit the complex can also act as an endonuclease, binding to the same target sequence but cutting the DNA some distance from this site. Whether the DNA is cut or modified depends on the methylation state of the target sequence. When the target site is unmodified, the DNA is cut. When the target site is hemimethylated, the complex acts as a maintenance MTase modifying the DNA so that both strands become methylated. After locating a non-methylated recognition site, the enzyme complex serves as a molecular motor that translocates DNA in an ATP-dependent manner until a collision occurs that triggers cleavage. The sequence is that of Type I restriction enzyme EcoEI specificity subunit from Escherichia coli.